A 474-amino-acid polypeptide reads, in one-letter code: Gamma-aminobutyric acid receptor subunit beta-2 (474 aa).

A signal peptide spans 1 to 25; the sequence is MWRVRKRGYFGIWSFPLIIAAVCAQ. The Extracellular portion of the chain corresponds to 26 to 244; that stretch reads SVNDPSNMSL…SFKLKRNIGY (219 aa). N32 and N104 each carry an N-linked (GlcNAc...) asparagine glycan. Y121 serves as a coordination point for histamine. A disulfide bridge links C160 with C174. Residue N173 is glycosylated (N-linked (GlcNAc...) asparagine). Residues 180-181 and T226 contribute to the histamine site; that span reads SY. Residues Y181 and T226 each coordinate 4-aminobutanoate. A run of 3 helical transmembrane segments spans residues 245–266, 270–292, and 304–326; these read FILQ…SFWI, ASAA…NTHL, and AIDM…YALV. Residues 327-451 lie on the Cytoplasmic side of the membrane; it reads NYIFFGRGPQ…DLTDVNAIDR (125 aa). At Y403 the chain carries Phosphotyrosine. The chain crosses the membrane as a helical span at residues 452-473; sequence WSRIFFPVVFSFFNIVYWLYYV.

This sequence belongs to the ligand-gated ion channel (TC 1.A.9) family. Gamma-aminobutyric acid receptor (TC 1.A.9.5) subfamily. GABRB2 sub-subfamily. In terms of assembly, heteropentamer, formed by a combination of alpha (GABRA1-6), beta (GABRB1-3), gamma (GABRG1-3), delta (GABRD), epsilon (GABRE), rho (GABRR1-3), pi (GABRP) and theta (GABRQ) chains, each subunit exhibiting distinct physiological and pharmacological properties. Interacts with UBQLN1. May interact with KIF21B. Identified in a complex of 720 kDa composed of LHFPL4, NLGN2, GABRA1, GABRB2, GABRG2 and GABRB3. Glycosylated. As to expression, expressed in brain (at protein level), in cerebellar granule cells. Expressed in lungs, in alveolar epithelium.

The protein resides in the postsynaptic cell membrane. It is found in the cell membrane. It localises to the cytoplasmic vesicle membrane. It carries out the reaction chloride(in) = chloride(out). Its activity is regulated as follows. Allosterically activated by benzodiazepines and the anesthetic etomidate. Inhibited by the antagonist bicuculline. Potentiated by histamine. Beta subunit of the heteropentameric ligand-gated chloride channel gated by gamma-aminobutyric acid (GABA), a major inhibitory neurotransmitter in the brain. GABA-gated chloride channels, also named GABA(A) receptors (GABAAR), consist of five subunits arranged around a central pore and contain GABA active binding site(s) located at the alpha and beta subunit interface(s). When activated by GABA, GABAARs selectively allow the flow of chloride anions across the cell membrane down their electrochemical gradient. Chloride influx into the postsynaptic neuron following GABAAR opening decreases the neuron ability to generate a new action potential, thereby reducing nerve transmission. GABAARs containing alpha-1 and beta-2 or -3 subunits exhibit synaptogenic activity; the gamma-2 subunit being necessary but not sufficient to induce rapid synaptic contacts formation. Extrasynaptic beta-2 receptors contribute to the tonic GABAergic inhibition. Beta-containing GABAARs can simultaneously bind GABA and histamine where histamine binds at the interface of two neighboring beta subunits, which may be involved in the regulation of sleep and wakefulness. The chain is Gamma-aminobutyric acid receptor subunit beta-2 from Rattus norvegicus (Rat).